Reading from the N-terminus, the 209-residue chain is Heat shock protein beta-1 (209 aa).

Arg12 is subject to Omega-N-methylarginine. Ser13 bears the Phosphoserine mark. Position 15 is a phosphoserine; by MAPKAPK2 and MAPKAPK3 (Ser15). Ser27 carries the post-translational modification Phosphoserine. Positions 74 to 209 (APAYSRALSR…AGKSEQSGAK (136 aa)) are interaction with TGFB1I1. The sHSP domain maps to 80 to 188 (ALSRQLSSGV…QSAEITIPVT (109 aa)). Phosphoserine; by MAPKAPK2, MAPKAPK3 and MAPKAPK5 is present on residues Ser82 and Ser86. 3 positions are modified to phosphoserine: Ser87, Ser90, and Ser102. An N6-acetyllysine modification is found at Lys127. A Phosphothreonine modification is found at Thr178. Residues Ser180 and Ser203 each carry the phosphoserine modification.

It belongs to the small heat shock protein (HSP20) family. In terms of assembly, homooligomer. Homodimer; becomes monomeric upon activation. Heterooligomer; with HSPB6. Associates with alpha- and beta-tubulin. Interacts with TGFB1I1. Interacts with CRYAB. Interacts with HSPB8. Interacts with HSPBAP1. In terms of processing, phosphorylated upon exposure to protein kinase C activators and heat shock. Phosphorylation by MAPKAPK2 and MAPKAPK3 in response to stress dissociates HSPB1 from large small heat-shock protein (sHsps) oligomers and impairs its chaperone activity and ability to protect against oxidative stress effectively. Phosphorylation by MAPKAPK5 in response to PKA stimulation induces F-actin rearrangement.

It localises to the cytoplasm. The protein resides in the nucleus. The protein localises to the cytoskeleton. It is found in the spindle. Small heat shock protein which functions as a molecular chaperone probably maintaining denatured proteins in a folding-competent state. Plays a role in stress resistance and actin organization. Through its molecular chaperone activity may regulate numerous biological processes including the phosphorylation and the axonal transport of neurofilament proteins. The polypeptide is Heat shock protein beta-1 (HSPB1) (Canis lupus familiaris (Dog)).